A 156-amino-acid chain; its full sequence is MSEQNNTEMAFQIQRIYTKDISFEAPNAPQVFQQEWQPEVKLDLDTASSQLADDIYEVVLRVTVTASLGEETAFLCEVQQGGIFTVGGIEGTQLAHCLGAYCPNILFPYARECITSLVSRGTFPQLNLAPVNFDALFMNYLQQQTEGEGAAQHQDA.

Belongs to the SecB family. In terms of assembly, homotetramer, a dimer of dimers. One homotetramer interacts with 1 SecA dimer.

It is found in the cytoplasm. Its function is as follows. One of the proteins required for the normal export of preproteins out of the cell cytoplasm. It is a molecular chaperone that binds to a subset of precursor proteins, maintaining them in a translocation-competent state. It also specifically binds to its receptor SecA. This chain is Protein-export protein SecB, found in Pectobacterium carotovorum subsp. carotovorum (strain PC1).